The following is a 559-amino-acid chain: Protein QNR-71 (559 aa).

Residues 1–22 form the signal peptide; that stretch reads MSQAHRHLALLLPAEAVLCAAA. The Extracellular portion of the chain corresponds to 23–487; sequence MRFQDVLSNG…NGGSSSGTTK (465 aa). N-linked (GlcNAc...) asparagine glycans are attached at residues asparagine 92, asparagine 133, asparagine 145, asparagine 149, asparagine 192, asparagine 199, asparagine 248, asparagine 274, asparagine 307, and asparagine 311. In terms of domain architecture, PKD spans 239 to 326; sequence VSMSQKHDRN…IIPVPCKPVT (88 aa). The segment at 329-356 is disordered; it reads PSLPTPAVTTDASSNSDPSAPNEMAEDN. The segment covering 335–347 has biased composition (polar residues); it reads AVTTDASSNSDPS. A glycan (N-linked (GlcNAc...) asparagine) is linked at asparagine 459. A helical membrane pass occupies residues 488-508; sequence GVFIFLGLLAVFGAIGAFVLY. At 509–559 the chain is on the cytoplasmic side; it reads KRYKQYKPIERSAGQAENQEGLSAYVSNFKAFFFPKSTERNPLLKSKPGIV.

This sequence belongs to the PMEL/NMB family. In terms of tissue distribution, melanocyte-specific, restricted to the pigmented layer of the retina and the epidermis.

The protein resides in the membrane. Functionally, could be involved in melanogenesis. This chain is Protein QNR-71 (QNR-71), found in Coturnix japonica (Japanese quail).